We begin with the raw amino-acid sequence, 168 residues long: Transcription antitermination protein NusB (168 aa).

This sequence belongs to the NusB family.

Involved in transcription antitermination. Required for transcription of ribosomal RNA (rRNA) genes. Binds specifically to the boxA antiterminator sequence of the ribosomal RNA (rrn) operons. The chain is Transcription antitermination protein NusB from Bradyrhizobium sp. (strain ORS 278).